Consider the following 360-residue polypeptide: MKTSMQRKLDQLSVRLAELNDLLSRENVTADLDQYRKLTREHAELGPVVEQYALWRQSRNDEAAAQELLADASMRDFAEEAIRSARERMTRLEGELQKMLLPKDPNDDRNIFLEIRAGTGGDESALFAGDLLRMYLRYAERQRWQVEMMSESPSDLGGYKEVIVRIAGQGAYSRLKFESGGHRVQRVPATETQGRIHTSACTVAVMPEADEIGEVEINPADLRIDTFRASGAGGQHINKTDSAVRVTHIPTGIVVECQDDRSQHKNKDRALKVLAARIKDKQYHEQHAKEAATRKSLIGSGDRSERIRTYNFPQGRMTDHRINLTLYRLEALMDGDLDELIGALVSEHQAELLASLGDAD.

N5-methylglutamine is present on Gln235.

The protein belongs to the prokaryotic/mitochondrial release factor family. Methylated by PrmC. Methylation increases the termination efficiency of RF1.

It localises to the cytoplasm. Peptide chain release factor 1 directs the termination of translation in response to the peptide chain termination codons UAG and UAA. The chain is Peptide chain release factor 1 from Burkholderia vietnamiensis (strain G4 / LMG 22486) (Burkholderia cepacia (strain R1808)).